The sequence spans 188 residues: Peptide deformylase (188 aa).

Fe cation contacts are provided by cysteine 109 and histidine 152. Residue glutamate 153 is part of the active site. Histidine 156 is a binding site for Fe cation.

Belongs to the polypeptide deformylase family. Fe(2+) is required as a cofactor.

It carries out the reaction N-terminal N-formyl-L-methionyl-[peptide] + H2O = N-terminal L-methionyl-[peptide] + formate. In terms of biological role, removes the formyl group from the N-terminal Met of newly synthesized proteins. Requires at least a dipeptide for an efficient rate of reaction. N-terminal L-methionine is a prerequisite for activity but the enzyme has broad specificity at other positions. In Chloroflexus aurantiacus (strain ATCC 29366 / DSM 635 / J-10-fl), this protein is Peptide deformylase.